The sequence spans 88 residues: Large ribosomal subunit protein bL31B (88 aa).

The protein belongs to the bacterial ribosomal protein bL31 family. Type B subfamily. As to quaternary structure, part of the 50S ribosomal subunit.

The chain is Large ribosomal subunit protein bL31B from Herminiimonas arsenicoxydans.